We begin with the raw amino-acid sequence, 150 residues long: Aspartate 1-decarboxylase (150 aa).

The active-site Schiff-base intermediate with substrate; via pyruvic acid is the S24. S24 is subject to Pyruvic acid (Ser). Position 56 (T56) interacts with substrate. The active-site Proton donor is Y57. 72–74 (GAA) lines the substrate pocket.

It belongs to the PanD family. In terms of assembly, heterooctamer of four alpha and four beta subunits. Pyruvate serves as cofactor. Is synthesized initially as an inactive proenzyme, which is activated by self-cleavage at a specific serine bond to produce a beta-subunit with a hydroxyl group at its C-terminus and an alpha-subunit with a pyruvoyl group at its N-terminus.

It is found in the cytoplasm. The enzyme catalyses L-aspartate + H(+) = beta-alanine + CO2. It participates in cofactor biosynthesis; (R)-pantothenate biosynthesis; beta-alanine from L-aspartate: step 1/1. Its function is as follows. Catalyzes the pyruvoyl-dependent decarboxylation of aspartate to produce beta-alanine. This Xanthobacter autotrophicus (strain ATCC BAA-1158 / Py2) protein is Aspartate 1-decarboxylase.